Reading from the N-terminus, the 322-residue chain is Ferrochelatase (322 aa).

2 residues coordinate Fe cation: histidine 193 and glutamate 274.

This sequence belongs to the ferrochelatase family.

The protein localises to the cytoplasm. It catalyses the reaction heme b + 2 H(+) = protoporphyrin IX + Fe(2+). The protein operates within porphyrin-containing compound metabolism; protoheme biosynthesis; protoheme from protoporphyrin-IX: step 1/1. In terms of biological role, catalyzes the ferrous insertion into protoporphyrin IX. The polypeptide is Ferrochelatase (Photobacterium profundum (strain SS9)).